The primary structure comprises 305 residues: Methionyl-tRNA formyltransferase (305 aa).

(6S)-5,6,7,8-tetrahydrofolate is bound at residue 110–113 (SLLP).

It belongs to the Fmt family.

The enzyme catalyses L-methionyl-tRNA(fMet) + (6R)-10-formyltetrahydrofolate = N-formyl-L-methionyl-tRNA(fMet) + (6S)-5,6,7,8-tetrahydrofolate + H(+). Functionally, attaches a formyl group to the free amino group of methionyl-tRNA(fMet). The formyl group appears to play a dual role in the initiator identity of N-formylmethionyl-tRNA by promoting its recognition by IF2 and preventing the misappropriation of this tRNA by the elongation apparatus. The sequence is that of Methionyl-tRNA formyltransferase from Ureaplasma parvum serovar 3 (strain ATCC 700970).